A 295-amino-acid polypeptide reads, in one-letter code: Sulfotransferase 1A1 (295 aa).

48 to 53 (KSGTTW) serves as a coordination point for 3'-phosphoadenylyl sulfate. 106 to 108 (KTH) contacts substrate. The active-site Proton acceptor is His-108. Residues Arg-130, Ser-138, Tyr-193, 227–232 (TSFKEM), and 255–259 (FMRKG) each bind 3'-phosphoadenylyl sulfate. Ser-138 is subject to Phosphoserine.

It belongs to the sulfotransferase 1 family. As to quaternary structure, homodimer. In terms of tissue distribution, liver, lung, adrenal, brain, platelets and skin.

Its subcellular location is the cytoplasm. It catalyses the reaction a phenol + 3'-phosphoadenylyl sulfate = an aryl sulfate + adenosine 3',5'-bisphosphate + H(+). The catalysed reaction is 17beta-estradiol + 3'-phosphoadenylyl sulfate = 17beta-estradiol 3-sulfate + adenosine 3',5'-bisphosphate + H(+). The enzyme catalyses 4-ethylphenol + 3'-phosphoadenylyl sulfate = 4-ethylphenyl sulfate + adenosine 3',5'-bisphosphate + H(+). It carries out the reaction 4-nitrophenol + 3'-phosphoadenylyl sulfate = 4-nitrophenyl sulfate + adenosine 3',5'-bisphosphate. It catalyses the reaction dopamine + 3'-phosphoadenylyl sulfate = dopamine 3-O-sulfate + adenosine 3',5'-bisphosphate + H(+). The catalysed reaction is dopamine + 3'-phosphoadenylyl sulfate = dopamine 4-O-sulfate + adenosine 3',5'-bisphosphate + H(+). The enzyme catalyses 3,3',5-triiodo-L-thyronine + 3'-phosphoadenylyl sulfate = 3,3',5-triiodo-L-thyronine sulfate + adenosine 3',5'-bisphosphate + H(+). It carries out the reaction 3,3',5'-triiodo-L-thyronine + 3'-phosphoadenylyl sulfate = 3,3',5'-triiodo-L-thyronine sulfate + adenosine 3',5'-bisphosphate + H(+). It catalyses the reaction 3,3'-diiodo-L-thyronine + 3'-phosphoadenylyl sulfate = 3,3'-diiodo-L-thyronine sulfate + adenosine 3',5'-bisphosphate + H(+). The catalysed reaction is L-thyroxine + 3'-phosphoadenylyl sulfate = L-thyroxine sulfate + adenosine 3',5'-bisphosphate + H(+). Sulfotransferase that utilizes 3'-phospho-5'-adenylyl sulfate (PAPS) as sulfonate donor to catalyze the sulfate conjugation of a wide variety of acceptor molecules bearing a hydroxyl or an amine group. Sulfonation increases the water solubility of most compounds, and therefore their renal excretion, but it can also result in bioactivation to form active metabolites. Displays broad substrate specificity for small phenolic compounds. Plays an important role in the sulfonation of endogenous molecules such as steroid hormones. Mediates the sulfate conjugation of a variety of xenobiotics, including the drugs acetaminophen and minoxidil. Mediates also the metabolic activation of carcinogenic N-hydroxyarylamines leading to highly reactive intermediates capable of forming DNA adducts, potentially resulting in mutagenesis. May play a role in gut microbiota-host metabolic interaction. O-sulfonates 4-ethylphenol (4-EP), a dietary tyrosine-derived metabolite produced by gut bacteria. The product 4-EPS crosses the blood-brain barrier and may negatively regulate oligodendrocyte maturation and myelination, affecting the functional connectivity of different brain regions associated with the limbic system. Catalyzes the sulfate conjugation of dopamine. Catalyzes the sulfation of T4 (L-thyroxine/3,5,3',5'-tetraiodothyronine), T3 (3,5,3'-triiodothyronine), rT3 (3,3',5'-triiodothyronine) and 3,3'-T2 (3,3'-diiodothyronine), with a substrate preference of 3,3'-T2 &gt; rT3 &gt; T3 &gt; T4. The sequence is that of Sulfotransferase 1A1 (SULT1A1) from Homo sapiens (Human).